Consider the following 231-residue polypeptide: NADH-ubiquinone oxidoreductase chain 4 (231 aa).

The next 6 membrane-spanning stretches (helical) occupy residues 1 to 21 (PIAG…YGII), 34 to 54 (LFIP…LTCL), 61 to 80 (SLIA…AITI), 84 to 106 (WGLS…LFCL), 118 to 138 (VLIL…WWLL), and 156 to 178 (LLIM…LSML).

The protein belongs to the complex I subunit 4 family.

The protein resides in the mitochondrion membrane. It catalyses the reaction a ubiquinone + NADH + 5 H(+)(in) = a ubiquinol + NAD(+) + 4 H(+)(out). Functionally, core subunit of the mitochondrial membrane respiratory chain NADH dehydrogenase (Complex I) that is believed to belong to the minimal assembly required for catalysis. Complex I functions in the transfer of electrons from NADH to the respiratory chain. The immediate electron acceptor for the enzyme is believed to be ubiquinone. The chain is NADH-ubiquinone oxidoreductase chain 4 (MT-ND4) from Azemiops feae (Fea's viper).